The sequence spans 975 residues: Cation-chloride cotransporter 1 (975 aa).

Disordered regions lie at residues 1–29 and 104–124; these read MDSGDIEEAGGNGEEEFRSGPRLGGSKYR and EQIQAPSSPRDGEDISITQGH. Topologically, residues 1 to 132 are cytoplasmic; the sequence is MDSGDIEEAG…GHPKPPALKM (132 aa). The helical transmembrane segment at 133-153 threads the bilayer; it reads GTMMGVFVPCLQNILGIIYYI. The Extracellular portion of the chain corresponds to 154 to 167; sequence RFTWIVGMAGIGQG. A helical transmembrane segment spans residues 168–188; it reads LVLVFLCGLCTFLTTISLSAI. Over 189-214 the chain is Cytoplasmic; sequence ATNGAMKGGGPYYLIGRALGPEVGIS. The helical transmembrane segment at 215 to 235 threads the bilayer; the sequence is IGLCFFLGNAVAGALYVLGAV. The Extracellular portion of the chain corresponds to 236–273; it reads ETFLKAFPAAGIFRETITKVNGTAVSESIQSPNSHDLQ. Asn256 carries N-linked (GlcNAc...) asparagine glycosylation. The helical transmembrane segment at 274 to 294 threads the bilayer; it reads VYGIVVTILLCFIVFGGVKMI. Topologically, residues 295 to 296 are cytoplasmic; that stretch reads NR. Residues 297–317 traverse the membrane as a helical segment; that stretch reads VAPAFLVPVLLSIFCIFIGIF. The Extracellular portion of the chain corresponds to 318-359; the sequence is LAKTDDPDNGITGLRLKSFKDNWGSAYQMTNDAGIPDPTGGT. Residues 360–380 traverse the membrane as a helical segment; it reads YWSFNELVGLFFPAVTGIMAG. At 381–398 the chain is on the cytoplasmic side; the sequence is SNRSASLKDTQKSIPVGT. A helical transmembrane segment spans residues 399-419; the sequence is LAATLTTTSLYLISVLFFGAV. Over 420 to 434 the chain is Extracellular; sequence ATRDKLLTDRLLTAT. The helical transmembrane segment at 435 to 455 threads the bilayer; that stretch reads IAWPFPAIVHVGIILSTLGAA. Topologically, residues 456 to 490 are cytoplasmic; the sequence is LQSLTGAPRLLAAIANDDILPILNYFKVADTSEPH. The chain crosses the membrane as a helical span at residues 491–511; it reads IATLFTAFICIGCVVIGNLDL. The Extracellular segment spans residues 512–515; the sequence is ITPT. The helical transmembrane segment at 516-536 threads the bilayer; sequence VTMFYLLCYSGVNLSCFLLDL. The Cytoplasmic segment spans residues 537–544; it reads LDAPSWRP. Residues 545–565 traverse the membrane as a helical segment; it reads RWKYHHWSLSFVGASLCIVIM. Residues 566 to 571 are Extracellular-facing; the sequence is FLISWS. A helical transmembrane segment spans residues 572–592; it reads FTVVAIALASLIYKYVGLKGK. Residues 593–975 are Cytoplasmic-facing; the sequence is AGDWGDGFKS…YHRDVVTLFT (383 aa).

Belongs to the SLC12A transporter family. As to expression, expressed in young seedlings cotyledon tips, plant vasculature, root tips and axillary buds. Expressed in root vascular strand in the pericycle and other parenchyma cells bordering xylem vessels. Expressed in the xylem/symplast boundaries of rosette stems, rosette leaves and cauline leaves. Expressed in stipules, trichomes and hydathodes. Expressed in pollen grains.

Its subcellular location is the membrane. Cation/chloride cotransporter that mediates potassium-chloride and sodium-chloride cotransports. Involved in plant development and Cl(-) homeostasis. May be involved in long distance Cl(-) transport. Does not function as an H(+)-dependent cotransporter. This chain is Cation-chloride cotransporter 1 (CCC1), found in Arabidopsis thaliana (Mouse-ear cress).